A 493-amino-acid chain; its full sequence is Guanosine-5'-triphosphate,3'-diphosphate pyrophosphatase (493 aa).

It belongs to the GppA/Ppx family. GppA subfamily.

It catalyses the reaction guanosine 3'-diphosphate 5'-triphosphate + H2O = guanosine 3',5'-bis(diphosphate) + phosphate + H(+). It participates in purine metabolism; ppGpp biosynthesis; ppGpp from GTP: step 2/2. Functionally, catalyzes the conversion of pppGpp to ppGpp. Guanosine pentaphosphate (pppGpp) is a cytoplasmic signaling molecule which together with ppGpp controls the 'stringent response', an adaptive process that allows bacteria to respond to amino acid starvation, resulting in the coordinated regulation of numerous cellular activities. In Salmonella heidelberg (strain SL476), this protein is Guanosine-5'-triphosphate,3'-diphosphate pyrophosphatase.